The chain runs to 1747 residues: Retroelement silencing factor 1 (1747 aa).

A Glycyl lysine isopeptide (Lys-Gly) (interchain with G-Cter in SUMO2) cross-link involves residue Lys-216. Phosphoserine is present on Ser-221. Polar residues predominate over residues 261–272 (TSAVPSQQYATQ). The segment at 261–280 (TSAVPSQQYATQTDKRPPPP) is disordered. Residue Lys-707 forms a Glycyl lysine isopeptide (Lys-Gly) (interchain with G-Cter in SUMO2) linkage. 3 disordered regions span residues 833–856 (PLTQ…NVNQ), 923–956 (PQKP…GFQK), and 1073–1101 (EGSV…KDPA). Residues 842-856 (ESTNGNSEVTPNVNQ) show a composition bias toward polar residues. Basic and acidic residues predominate over residues 937–956 (REPEKQLDNTTENKDFGFQK). Polar residues predominate over residues 1073–1087 (EGSVGQQTTYQTSED). The segment covering 1089-1101 (TADKTSSDSKDPA) has biased composition (basic and acidic residues). Lys-1136 is covalently cross-linked (Glycyl lysine isopeptide (Lys-Gly) (interchain with G-Cter in SUMO2)). Ser-1145 bears the Phosphoserine mark. The tract at residues 1200-1274 (EEKQKEQCSP…KSLPRTEQEL (75 aa)) is disordered. Basic and acidic residues predominate over residues 1217–1226 (QGERTSDRDV). Position 1240 is a phosphothreonine (Thr-1240). The segment covering 1242 to 1261 (PDGKSHFPELQDDSRKDTPK) has biased composition (basic and acidic residues). Ser-1358 carries the phosphoserine modification. Glycyl lysine isopeptide (Lys-Gly) (interchain with G-Cter in SUMO2) cross-links involve residues Lys-1528 and Lys-1636. Residues 1686 to 1716 (KRTQKDSQERDNVNSRLSKRSFSADGFEMLQ) are disordered. A compositionally biased stretch (basic and acidic residues) spans 1689-1698 (QKDSQERDNV). Ser-1708 bears the Phosphoserine mark. Residue Lys-1723 forms a Glycyl lysine isopeptide (Lys-Gly) (interchain with G-Cter in SUMO2) linkage. Phosphoserine is present on Ser-1740.

In terms of assembly, interacts with SETDB1.

Its subcellular location is the nucleus. Its function is as follows. Plays a role in the regulation of imprinted gene expression, regulates repressive epigenetic modifications associated with SETDB1. Required for the recruitment or accumulation of SETDB1 to the endogenous retroviruses (ERVs) and maintenance of repressive chromatin configuration, contributing to a subset of the SETDB1-dependent ERV silencing in embryonic stem cells. In Homo sapiens (Human), this protein is Retroelement silencing factor 1.